The primary structure comprises 267 residues: GRYTVQNQWGGSSAPWNDAGVFVLGGRANQNVMAIDVSSSDGGKTLTGTMTYSGEGPIGFKGTRRGESNNYEVENQWGGSSAPWHPAGTFVIGSRSGQAVVAMNVTSHDGGKTLSGHMTYENEGPIGFKGTQAEGDTYNVENQWGGSSAPWNKAGVWALGSRASQGVVKLDVSSSDGGKTLTGTMQYQNEGPIGFRGTLTGANNYKAENQWGGSSGAWNPAGLWLIGDRHNQNIIGVKVTSDDNGKTLEGTCTYYREGPIGFKGVAN.

Repeat copies occupy residues 1-67 (GRYT…RRGE), 68-135 (SNNY…QAEG), 136-202 (DTYN…LTGA), and 203-267 (NNYK…GVAN). The tract at residues 1-267 (GRYTVQNQWG…GPIGFKGVAN (267 aa)) is 4 X approximate tandem repeats.

Monomer.

Functionally, lectin specific for high mannose N-glycans, recognizes the branched moiety of these glycans. Does not recognize other types of N-glycans or monosaccharides. The protein is Lectin SfL-2 of Solieria filiformis (Red alga).